A 340-amino-acid polypeptide reads, in one-letter code: Ketol-acid reductoisomerase (NADP(+)) (340 aa).

Positions 2–181 constitute a KARI N-terminal Rossmann domain; the sequence is AKVFYNGDIN…GSARAGVIET (180 aa). NADP(+) is bound by residues 25-28, Arg-48, Ser-52, and 82-85; these read YGSQ and DEHQ. The active site involves His-107. Residue Gly-133 coordinates NADP(+). The region spanning 182–327 is the KARI C-terminal knotted domain; sequence TFQEETETDL…RELREMMPFV (146 aa). Positions 190, 194, 226, and 230 each coordinate Mg(2+). A substrate-binding site is contributed by Ser-251.

Belongs to the ketol-acid reductoisomerase family. Requires Mg(2+) as cofactor.

It carries out the reaction (2R)-2,3-dihydroxy-3-methylbutanoate + NADP(+) = (2S)-2-acetolactate + NADPH + H(+). The enzyme catalyses (2R,3R)-2,3-dihydroxy-3-methylpentanoate + NADP(+) = (S)-2-ethyl-2-hydroxy-3-oxobutanoate + NADPH + H(+). It participates in amino-acid biosynthesis; L-isoleucine biosynthesis; L-isoleucine from 2-oxobutanoate: step 2/4. It functions in the pathway amino-acid biosynthesis; L-valine biosynthesis; L-valine from pyruvate: step 2/4. Its function is as follows. Involved in the biosynthesis of branched-chain amino acids (BCAA). Catalyzes an alkyl-migration followed by a ketol-acid reduction of (S)-2-acetolactate (S2AL) to yield (R)-2,3-dihydroxy-isovalerate. In the isomerase reaction, S2AL is rearranged via a Mg-dependent methyl migration to produce 3-hydroxy-3-methyl-2-ketobutyrate (HMKB). In the reductase reaction, this 2-ketoacid undergoes a metal-dependent reduction by NADPH to yield (R)-2,3-dihydroxy-isovalerate. This Halalkalibacterium halodurans (strain ATCC BAA-125 / DSM 18197 / FERM 7344 / JCM 9153 / C-125) (Bacillus halodurans) protein is Ketol-acid reductoisomerase (NADP(+)).